A 465-amino-acid chain; its full sequence is Gamma-aminobutyric acid receptor subunit rho-2 (465 aa).

The signal sequence occupies residues 1–20; the sequence is MPYLMRLALVLFCLMALVES. The Extracellular portion of the chain corresponds to 21 to 260; it reads RKPRRKRWTG…LYINFTLRRH (240 aa). A 4-aminobutanoate-binding site is contributed by Arg105. N-linked (GlcNAc...) asparagine glycosylation is present at Asn120. Ser169 is a binding site for 4-aminobutanoate. Cysteines 178 and 192 form a disulfide. Glu197 is a 4-aminobutanoate binding site. Asn254 carries an N-linked (GlcNAc...) asparagine glycan. Residues 261–281 form a helical membrane-spanning segment; the sequence is IFFFLLQTYFPATLMVMLSWV. At 282–293 the chain is on the cytoplasmic side; that stretch reads SFWIDHRAVPAR. A helical membrane pass occupies residues 294-314; that stretch reads VSLGIMTVLTMSTIITGVNAS. At 315–325 the chain is on the extracellular side; the sequence is MPRVSYIRAVD. Residues 326 to 346 form a helical membrane-spanning segment; that stretch reads IYLWVSFVFVFLSVLEYAAVN. The Cytoplasmic portion of the chain corresponds to 347–443; it reads YLTTLQEQKE…IFQNTHAIDK (97 aa). The chain crosses the membrane as a helical span at residues 444–464; it reads YSRLIFPAFYIVFNLIYWSVF. A topological domain (extracellular) is located at residue Ser465.

It belongs to the ligand-gated ion channel (TC 1.A.9) family. Gamma-aminobutyric acid receptor (TC 1.A.9.5) subfamily. GABRR2 sub-subfamily. In terms of assembly, three rho subunits (rho-1/GBRR1, rho-2/GBRR2 and rho-3/GBRR3) coassemble either to form functional homopentamers or heteropentamers. Rho-2 is unable to form a functional homopentamer. Interacts with SQSTM1. Expressed in the cerebellum.

It localises to the postsynaptic cell membrane. The protein localises to the cell membrane. It carries out the reaction chloride(in) = chloride(out). Functionally, rho subunit of the pentameric ligand-gated chloride channels responsible for mediating the effects of gamma-aminobutyric acid (GABA), the major inhibitory neurotransmitter in the brain. Rho-containing GABA-gated chloride channels are a subclass of GABA(A) receptors (GABAARs) entirely composed of rho subunits, where GABA molecules bind at the rho intersubunit interfaces. When activated by GABA, rho-GABAARs selectively allow the flow of chloride anions across the cell membrane down their electrochemical gradient. Rho-2 GABAARs may contribute to the regulation of glial development in the cerebellum by controlling extrasynaptic transmission. Rho-2 GABAARs are also involved in neuronal tonic (extrasynaptic) and phasic (synaptic) transmission in the Purkinje neurons of the cerebellum. Rho-2 GABAARs expressed in retina may play a role in retinal neurotransmission. This Mus musculus (Mouse) protein is Gamma-aminobutyric acid receptor subunit rho-2.